A 513-amino-acid polypeptide reads, in one-letter code: ATP synthase subunit alpha (513 aa).

ATP is bound at residue 169–176 (GDRQIGKT).

This sequence belongs to the ATPase alpha/beta chains family. F-type ATPases have 2 components, CF(1) - the catalytic core - and CF(0) - the membrane proton channel. CF(1) has five subunits: alpha(3), beta(3), gamma(1), delta(1), epsilon(1). CF(0) has three main subunits: a(1), b(2) and c(9-12). The alpha and beta chains form an alternating ring which encloses part of the gamma chain. CF(1) is attached to CF(0) by a central stalk formed by the gamma and epsilon chains, while a peripheral stalk is formed by the delta and b chains.

The protein resides in the cell inner membrane. It catalyses the reaction ATP + H2O + 4 H(+)(in) = ADP + phosphate + 5 H(+)(out). Produces ATP from ADP in the presence of a proton gradient across the membrane. The alpha chain is a regulatory subunit. The protein is ATP synthase subunit alpha of Shewanella woodyi (strain ATCC 51908 / MS32).